The chain runs to 607 residues: ENTH domain-containing protein 1 (607 aa).

The region spanning N9–R141 is the ENTH domain. Positions E543–N574 form a coiled coil.

This chain is ENTH domain-containing protein 1 (ENTHD1), found in Homo sapiens (Human).